Here is a 375-residue protein sequence, read N- to C-terminus: Thiamine-phosphate synthase (375 aa).

The interval 1–127 (MTNAESRTVL…AACIESIRYQ (127 aa)) is unknown. Positions 128–375 (CYATFRELEL…SSDVCPLPND (248 aa)) are thiamine-phosphate synthase. Residues 183–185 (QLR) and Asn-215 contribute to the 4-amino-2-methyl-5-(diphosphooxymethyl)pyrimidine site. Residues Asp-216 and Glu-235 each coordinate Mg(2+). 2 residues coordinate 4-amino-2-methyl-5-(diphosphooxymethyl)pyrimidine: Ser-254 and Lys-283. 2-[(2R,5Z)-2-carboxy-4-methylthiazol-5(2H)-ylidene]ethyl phosphate is bound at residue Gly-315.

Belongs to the thiamine-phosphate synthase family. Requires Mg(2+) as cofactor.

It carries out the reaction 2-[(2R,5Z)-2-carboxy-4-methylthiazol-5(2H)-ylidene]ethyl phosphate + 4-amino-2-methyl-5-(diphosphooxymethyl)pyrimidine + 2 H(+) = thiamine phosphate + CO2 + diphosphate. It catalyses the reaction 2-(2-carboxy-4-methylthiazol-5-yl)ethyl phosphate + 4-amino-2-methyl-5-(diphosphooxymethyl)pyrimidine + 2 H(+) = thiamine phosphate + CO2 + diphosphate. The catalysed reaction is 4-methyl-5-(2-phosphooxyethyl)-thiazole + 4-amino-2-methyl-5-(diphosphooxymethyl)pyrimidine + H(+) = thiamine phosphate + diphosphate. The protein operates within cofactor biosynthesis; thiamine diphosphate biosynthesis; thiamine phosphate from 4-amino-2-methyl-5-diphosphomethylpyrimidine and 4-methyl-5-(2-phosphoethyl)-thiazole: step 1/1. Condenses 4-methyl-5-(beta-hydroxyethyl)thiazole monophosphate (THZ-P) and 2-methyl-4-amino-5-hydroxymethyl pyrimidine pyrophosphate (HMP-PP) to form thiamine monophosphate (TMP). The protein is Thiamine-phosphate synthase (thiE) of Rhodopirellula baltica (strain DSM 10527 / NCIMB 13988 / SH1).